The following is a 120-amino-acid chain: UPF0344 protein lmo2265 (120 aa).

4 helical membrane-spanning segments follow: residues 3-23 (GYIH…ALLI), 33-53 (MLQM…IMMV), 62-82 (ILAI…EMLL), and 92-112 (GMFL…GFYL).

Belongs to the UPF0344 family.

The protein localises to the cell membrane. This chain is UPF0344 protein lmo2265, found in Listeria monocytogenes serovar 1/2a (strain ATCC BAA-679 / EGD-e).